The sequence spans 387 residues: Beta-carotene 4-ketolase (387 aa).

Positions Met1–Gln78 are disordered. Composition is skewed to polar residues over residues Asn43 to Gly53 and Asp65 to Gln78.

It carries out the reaction echinenone + 2 AH2 + 2 O2 = canthaxanthin + 2 A + 3 H2O. The enzyme catalyses all-trans-beta-carotene + 2 AH2 + 2 O2 = echinenone + 2 A + 3 H2O. It participates in carotenoid biosynthesis. Its function is as follows. Involved in the biosynthesis of ketocarotenoids which are powerful anti-oxidative molecules. Catalyzes the conversion of beta-carotene to canthaxanthin via echinenone. The chain is Beta-carotene 4-ketolase from Protosiphon botryoides (Green alga).